The chain runs to 805 residues: MDPKEKNYDASAITVLEGLQAVRERPGMYIGDTGITGLHHLVYEVVDNSIDEAMAGYCSRIDVRILEDGGIVIVDNGRGIPIEVHERESAKQGREVSALEVVLTVLHAGGKFDKDSYKVSGGLHGVGVSCVNALSEKLVATVFKDKKCYQMEFSRGIPVTPLQYVSVSDRQGTEIVFYPDPKIFSTCTFDRSILMKRLRELAFLNRGITIVFEDDRDVSFDKVTFFYEGGIQSFVSYLNQNKESLFSEPIYICGTRVGDDGEIEFEAALQWNSGYSELVYSYANNIPTRQGGTHLTGFSTALTRVINTYIKAHNLAKNNKLALTGEDIREGLTAVISVKVPNPQFEGQTKQKLGNSDVSSVAQQVVGEALTIFFEENPQIARMIVDKVFVAAQAREAAKKARELTLRKSALDSARLPGKLIDCLEKDPEKCEMYIVEGDSAGGSAKQGRDRRFQAILPIRGKILNVEKARLQKIFQNQEIGTIIAALGCGIGADNFNLSKLRYRRIIIMTDADVDGSHIRTLLLTFFYRHMTALIENECVYIAQPPLYKVSKKKDFRYILSEKEMDSYLLMLGTNESSILFKSTERELRGEALESFINVILDVESFINTLEKKAIPFSEFLEMYKEGIGYPLYYLAPATGMQGGRYLYSDEEKEEALAQEETHKFKIIELYKVAVFVDIQNQLKEYGLDISSYLIPQKNEIVIGNEDSPSCNYSCYTLEEVINYLKNLGRKGIEIQRYKGLGEMNADQLWDTTMNPEQRTLIHVSLKDAVEADHIFTMLMGEEVPPRREFIESHALSIRINNLDI.

Residues 431 to 546 (CEMYIVEGDS…NECVYIAQPP (116 aa)) enclose the Toprim domain. The Mg(2+) site is built by glutamate 437, aspartate 511, and aspartate 513.

This sequence belongs to the type II topoisomerase GyrB family. As to quaternary structure, heterotetramer, composed of two GyrA and two GyrB chains. In the heterotetramer, GyrA contains the active site tyrosine that forms a transient covalent intermediate with DNA, while GyrB binds cofactors and catalyzes ATP hydrolysis. Mg(2+) is required as a cofactor. The cofactor is Mn(2+). It depends on Ca(2+) as a cofactor.

Its subcellular location is the cytoplasm. It catalyses the reaction ATP-dependent breakage, passage and rejoining of double-stranded DNA.. Its function is as follows. A type II topoisomerase that negatively supercoils closed circular double-stranded (ds) DNA in an ATP-dependent manner to modulate DNA topology and maintain chromosomes in an underwound state. Negative supercoiling favors strand separation, and DNA replication, transcription, recombination and repair, all of which involve strand separation. Also able to catalyze the interconversion of other topological isomers of dsDNA rings, including catenanes and knotted rings. Type II topoisomerases break and join 2 DNA strands simultaneously in an ATP-dependent manner. The protein is DNA gyrase subunit B of Chlamydia pneumoniae (Chlamydophila pneumoniae).